Consider the following 345-residue polypeptide: Phenylalanine--tRNA ligase alpha subunit (345 aa).

Glutamate 266 contacts Mg(2+).

This sequence belongs to the class-II aminoacyl-tRNA synthetase family. Phe-tRNA synthetase alpha subunit type 1 subfamily. As to quaternary structure, tetramer of two alpha and two beta subunits. Mg(2+) is required as a cofactor.

The protein localises to the cytoplasm. The enzyme catalyses tRNA(Phe) + L-phenylalanine + ATP = L-phenylalanyl-tRNA(Phe) + AMP + diphosphate + H(+). This Methylibium petroleiphilum (strain ATCC BAA-1232 / LMG 22953 / PM1) protein is Phenylalanine--tRNA ligase alpha subunit.